The following is a 636-amino-acid chain: Nucleolar protein 9 (636 aa).

Residues 1-59 (MGQGPRSPHKVGRRFPAGGKRGRGAKGSGRPLPGRKRQPWPPPDGRSEPAPDSHPHLSP) form a disordered region. At S7 the chain carries Phosphoserine. Residues 45–57 (GRSEPAPDSHPHL) are compositionally biased toward basic and acidic residues. Pumilio repeat units follow at residues 92 to 123 (EVET…KPLC) and 189 to 223 (EVCD…ESER). The tract at residues 222–241 (ERARPRGSQSSEAQKTPAQE) is disordered. A compositionally biased stretch (polar residues) spans 228 to 238 (GSQSSEAQKTP). 4 Pumilio repeats span residues 313 to 348 (SVDG…QSLF), 351 to 386 (HLQG…SPVF), 509 to 544 (LTGP…RRRV), and 547 to 581 (NLKG…KEIA).

The protein belongs to the NOP9 family.

In Homo sapiens (Human), this protein is Nucleolar protein 9 (NOP9).